A 1276-amino-acid polypeptide reads, in one-letter code: Sterol regulatory element-binding protein cleavage-activating protein (1276 aa).

Over 1–18 (MTLTERLREKISQAFYNH) the chain is Cytoplasmic. Residues 19-39 (GLLCASYPIPIILFTGLCILA) form a helical membrane-spanning segment. Topologically, residues 40 to 279 (CCYPLLKLPL…NLVHVHFKEE (240 aa)) are lumenal. The loop-1 stretch occupies residues 46-284 (KLPLPGTGPV…HFKEEIGIAE (239 aa)). The segment at 60–81 (PVKGYSPPPADSDHKQGEPSEQ) is disordered. Residue Asn-263 is glycosylated (N-linked (GlcNAc...) asparagine). Residues 280–300 (IGIAELIPLVTTYIILFAYIY) form a helical membrane-spanning segment. The SSD domain maps to 284 to 442 (ELIPLVTTYI…MLFFTTVLSI (159 aa)). Topologically, residues 301-312 (FSTRKIDMVKSK) are cytoplasmic. A helical transmembrane segment spans residues 313–333 (WGLALAAVVTVLSSLLMSVGL). Residues 334–344 (CTLFGLTPTLN) are Lumenal-facing. A helical membrane pass occupies residues 345–365 (GGEIFPYLVVVIGLENVLVLT). Over 366-401 (KSVVSTPVDLEVKLRIAQGLSSESWSIMKNVATELG) the chain is Cytoplasmic. A helical transmembrane segment spans residues 402–422 (IILIGYFTLVPAIQEFCLFAV). Residue Val-423 is a topological domain, lumenal. Residues 424–444 (GLVSDFFLQMLFFTTVLSIDI) traverse the membrane as a helical segment. Over 445–518 (RRMELADLNK…FLARTRLAQR (74 aa)) the chain is Cytoplasmic. The short motif at 447–452 (MELADL) is the ER export signal element. Residues Lys-454 and Lys-466 each participate in a glycyl lysine isopeptide (Lys-Gly) (interchain with G-Cter in ubiquitin) cross-link. The chain crosses the membrane as a helical span at residues 519-539 (LIMAGTVVWIGILVYTDPAGL). Residues 535–710 (DPAGLRTYLA…QTHGDITLYK (176 aa)) form a loop-7 region. At 540–707 (RTYLAAQVTE…GGTQTHGDIT (168 aa)) the chain is on the lumenal side. Asn-590 and Asn-641 each carry an N-linked (GlcNAc...) asparagine glycan. A helical membrane pass occupies residues 708–728 (LYKVAALGLAAGIVLVLLLLC). At 729-1276 (LYRVLCPRNY…YVPSVLEKLD (548 aa)) the chain is on the cytoplasmic side. The tract at residues 731-1276 (RVLCPRNYGQ…YVPSVLEKLD (546 aa)) is interaction with SREBF2. Residues 771–811 (VLRGHLMDIECLASDGMLLVSCCLAGQVCVWDAQTGDCLTR) form a WD 1 repeat. Phosphoserine is present on residues Ser-821, Ser-837, Ser-843, Ser-850, Ser-905, and Ser-934. A disordered region spans residues 834–903 (ERLSDGGKAS…RHRAGCGRSR (70 aa)). Residues 928 to 958 (SALRPPSPGPPLPQASQEEGTAPEKGSPPLA) are disordered. WD repeat units follow at residues 949–999 (APEK…LCCS) and 1002–1039 (EISS…SLSP). Omega-N-methylarginine is present on Arg-1048. WD repeat units lie at residues 1074–1111 (AHQK…CLFT), 1114–1152 (GHSG…RVSH), 1155–1192 (AHRG…KLYS), and 1194–1232 (QQDL…LLQT).

Belongs to the WD repeat SCAP family. Membrane region forms a homotetramer. Component of the SCAP-SREBP complex (composed of SCAP and SREBF1/SREBP1 or SREBF2/SREBP2); interacts with SREBF1/SREBP1 or SREBF2/SREBP2 through its C-terminal cytoplasmic domain. Forms a ternary complex with INSIG1 or INSIG2 through its transmembrane domains at high sterol concentrations. Interacts with PAQR3; the interaction anchors the SCAP-SREBP complex to the Golgi apparatus in low cholesterol conditions. Interacts with the SEC23-SEC24 complex in a SAR1-GTP-dependent manner through an ER export signal in its third cytoplasmic loop. Interacts with RNF139; the interaction inhibits the interaction of SCAP with SEC24B and hampering the ER to Golgi transport of the SCAP-SREBP complex. Interacts with SPRING1. In terms of processing, ubiquitinated at Lys-454 and Lys-466. RNF145 triggers ubiquitination of SCAP, likely inhibiting SCAP-SREBP complex transport to the Golgi apparatus and the subsequent processing/maturation of SREBF2/SREBP2.

It is found in the endoplasmic reticulum membrane. The protein localises to the golgi apparatus membrane. It localises to the cytoplasmic vesicle. The protein resides in the COPII-coated vesicle membrane. Its function is as follows. Escort protein required for cholesterol as well as lipid homeostasis. Regulates export of the SCAP-SREBP complex from the endoplasmic reticulum to the Golgi upon low cholesterol, thereby regulating the processing of sterol regulatory element-binding proteins (SREBPs) SREBF1/SREBP1 and SREBF2/SREBP2. At high sterol concentrations, formation of a ternary complex with INSIG (INSIG1 or INSIG2) leads to mask the ER export signal in SCAP, promoting retention of the complex in the endoplasmic reticulum. Low sterol concentrations trigger release of INSIG, a conformational change in the SSD domain of SCAP, unmasking of the ER export signal, promoting recruitment into COPII-coated vesicles and transport of the SCAP-SREBP to the Golgi: in the Golgi, SREBPs are then processed, releasing the transcription factor fragment of SREBPs from the membrane, its import into the nucleus and up-regulation of LDLR, INSIG1 and the mevalonate pathway. Binds cholesterol via its SSD domain. The polypeptide is Sterol regulatory element-binding protein cleavage-activating protein (Rattus norvegicus (Rat)).